A 145-amino-acid chain; its full sequence is Small ribosomal subunit protein uS9 (145 aa).

It belongs to the universal ribosomal protein uS9 family.

It is found in the cytoplasm. This chain is Small ribosomal subunit protein uS9 (RPS16), found in Fritillaria agrestis (Stinkbells).